The primary structure comprises 371 residues: SufE-like protein 1, chloroplastic/mitochondrial (371 aa).

A chloroplast and mitochondrion-targeting transit peptide spans 1–66 (MAAAMSSSCC…ISTGIVPPPS (66 aa)). Cys-131 (cysteine persulfide intermediate) is an active-site residue. An S-glutathionyl cysteine modification is found at Cys-131. The disordered stretch occupies residues 218–249 (VKGEEDSSSGESSESSFVSIPETKDEANVPEV).

The protein belongs to the SufE family. In terms of assembly, heterotetramer with NFS2. Interacts with NFS2 and NIFS1. Interacts in vitro with GRXS14, GRXS15, GRXS16 and GRXS17, but not with GRXC5. Interacts in vivo only with GRXS14 and GRXS16. Glutathionylated. Glutathionylation strongly reduces the stimulation of NFS2 activity. Expressed in roots, leaves, stems and flowers.

It localises to the plastid. The protein localises to the chloroplast stroma. The protein resides in the mitochondrion. It participates in cofactor biosynthesis; iron-sulfur cluster biosynthesis. Functionally, participates in cysteine desulfurization mediated by NFS2 in chloroplast and NIFS1 in mitochondrion. Activates the cysteine desulfurase activity of NFS2. Cysteine desulfurization mobilizes sulfur from L-cysteine to yield L-alanine and supplies the inorganic sulfur for iron-sulfur (Fe-S) cluster formation. Glutaredoxins regulate SUFE1 activity by inducing its reduction and deglutathionylation. This is SufE-like protein 1, chloroplastic/mitochondrial from Arabidopsis thaliana (Mouse-ear cress).